We begin with the raw amino-acid sequence, 188 residues long: Elongation factor P (188 aa).

The protein belongs to the elongation factor P family.

Its subcellular location is the cytoplasm. It participates in protein biosynthesis; polypeptide chain elongation. Its function is as follows. Involved in peptide bond synthesis. Stimulates efficient translation and peptide-bond synthesis on native or reconstituted 70S ribosomes in vitro. Probably functions indirectly by altering the affinity of the ribosome for aminoacyl-tRNA, thus increasing their reactivity as acceptors for peptidyl transferase. The sequence is that of Elongation factor P from Aeromonas salmonicida (strain A449).